Consider the following 425-residue polypeptide: Kynurenine/alpha-aminoadipate aminotransferase, mitochondrial (425 aa).

Residues 1–29 constitute a mitochondrion transit peptide; sequence MNYARFITAASAARNPSPIRTMTDILSRG. Arg20 is a binding site for substrate. Lys69 bears the N6-acetyllysine mark. Substrate contacts are provided by Tyr74 and Tyr142. An N6-acetyllysine modification is found at Lys179. The interval 181–208 is disordered; sequence EDAKNPQKNTPKFLYTVPNGNNPTGNSL. Positions 198 to 208 are enriched in polar residues; sequence PNGNNPTGNSL. Position 202 (Asn202) interacts with substrate. An N6-(pyridoxal phosphate)lysine; alternate modification is found at Lys263. Residues Lys263, Lys339, and Lys367 each carry the N6-acetyllysine; alternate modification. N6-succinyllysine; alternate is present on residues Lys263, Lys339, and Lys367. Arg399 contributes to the substrate binding site. Lys422 bears the N6-acetyllysine mark.

Belongs to the class-I pyridoxal-phosphate-dependent aminotransferase family. In terms of assembly, homodimer. Requires pyridoxal 5'-phosphate as cofactor. In terms of tissue distribution, higher expression in the liver. Also found in heart, brain, kidney, pancreas, prostate, testis and ovary.

The protein resides in the mitochondrion. It catalyses the reaction glycine + 2-oxoglutarate = glyoxylate + L-glutamate. The enzyme catalyses L-kynurenine + 2-oxoglutarate = kynurenate + L-glutamate + H2O. The catalysed reaction is L-kynurenine + glyoxylate = kynurenate + glycine + H2O. It carries out the reaction 3-hydroxy-L-kynurenine + glyoxylate = xanthurenate + glycine + H2O. It catalyses the reaction 2-oxohexanoate + L-kynurenine = L-2-aminohexanoate + kynurenate + H2O. The enzyme catalyses 3-phenylpyruvate + L-kynurenine = kynurenate + L-phenylalanine + H2O. The catalysed reaction is 4-methylsulfanyl-2-oxobutanoate + L-kynurenine = kynurenate + L-methionine + H2O. It carries out the reaction 2-oxo-3-sulfanylpropanoate + L-kynurenine = kynurenate + L-cysteine + H2O. It catalyses the reaction indole-3-pyruvate + L-kynurenine = kynurenate + L-tryptophan + H2O. The enzyme catalyses 2-oxopentanoate + L-kynurenine = L-2-aminopentanoate + kynurenate + H2O. The catalysed reaction is 4-methyl-2-oxopentanoate + L-kynurenine = kynurenate + L-leucine + H2O. It carries out the reaction L-2-aminoadipate + 2-oxoglutarate = 2-oxoadipate + L-glutamate. It catalyses the reaction glyoxylate + L-methionine = 4-methylsulfanyl-2-oxobutanoate + glycine. The enzyme catalyses L-2-aminoadipate + glyoxylate = 2-oxoadipate + glycine. The catalysed reaction is L-tyrosine + glyoxylate = 3-(4-hydroxyphenyl)pyruvate + glycine. It carries out the reaction glyoxylate + L-phenylalanine = 3-phenylpyruvate + glycine. It catalyses the reaction L-tryptophan + glyoxylate = indole-3-pyruvate + glycine. The enzyme catalyses L-leucine + glyoxylate = 4-methyl-2-oxopentanoate + glycine. The catalysed reaction is 2-oxobutanoate + L-kynurenine = (2S)-2-aminobutanoate + kynurenate + H2O. It carries out the reaction 2-oxoadipate + L-kynurenine = L-2-aminoadipate + kynurenate + H2O. The protein operates within amino-acid degradation; L-lysine degradation via saccharopine pathway; glutaryl-CoA from L-lysine: step 4/6. Kynurenine transaminase activity is competitively inhibited by aminoadipate, asparagine, glutamate, histidine, cysteine, lysine, 3-hydroxy-kynurenine and phenylalanine. Its function is as follows. Transaminase with broad substrate specificity. Has transaminase activity towards aminoadipate, kynurenine, methionine and glutamate. Shows activity also towards tryptophan, aspartate and hydroxykynurenine. Accepts a variety of oxo-acids as amino-group acceptors, with a preference for 2-oxoglutarate, 2-oxocaproic acid, phenylpyruvate and alpha-oxo-gamma-methiol butyric acid. Can also use glyoxylate as amino-group acceptor (in vitro). The polypeptide is Kynurenine/alpha-aminoadipate aminotransferase, mitochondrial (Homo sapiens (Human)).